The chain runs to 435 residues: Asparagine--tRNA ligase (435 aa).

It belongs to the class-II aminoacyl-tRNA synthetase family. Homodimer.

The protein localises to the cytoplasm. It carries out the reaction tRNA(Asn) + L-asparagine + ATP = L-asparaginyl-tRNA(Asn) + AMP + diphosphate + H(+). The sequence is that of Asparagine--tRNA ligase from Leptospira borgpetersenii serovar Hardjo-bovis (strain JB197).